The primary structure comprises 189 residues: Elongation factor P (189 aa).

It belongs to the elongation factor P family.

The protein localises to the cytoplasm. It functions in the pathway protein biosynthesis; polypeptide chain elongation. Involved in peptide bond synthesis. Stimulates efficient translation and peptide-bond synthesis on native or reconstituted 70S ribosomes in vitro. Probably functions indirectly by altering the affinity of the ribosome for aminoacyl-tRNA, thus increasing their reactivity as acceptors for peptidyl transferase. The chain is Elongation factor P from Pseudomonas savastanoi pv. phaseolicola (strain 1448A / Race 6) (Pseudomonas syringae pv. phaseolicola (strain 1448A / Race 6)).